A 152-amino-acid chain; its full sequence is MAERTHFMELALVEARSAGERDEVPIGAVLVLDGRVIARSGNRTRELNDVTAHAEIAVIRMACEALGQERLPGADLYVTLEPCTMCAAAISFARIRRLYYGAQDPKGGAVESGVRFFSQPTCHHAPDVYSGLAESESAEILRQFFREKRLDD.

One can recognise a CMP/dCMP-type deaminase domain in the interval 2–111; the sequence is AERTHFMELA…AQDPKGGAVE (110 aa). Zn(2+) is bound at residue His53. Glu55 (proton donor) is an active-site residue. Residues Cys83 and Cys86 each contribute to the Zn(2+) site.

It belongs to the cytidine and deoxycytidylate deaminase family. As to quaternary structure, homodimer. The cofactor is Zn(2+).

It catalyses the reaction adenosine(34) in tRNA + H2O + H(+) = inosine(34) in tRNA + NH4(+). Catalyzes the deamination of adenosine to inosine at the wobble position 34 of tRNA(Arg2). This Agrobacterium fabrum (strain C58 / ATCC 33970) (Agrobacterium tumefaciens (strain C58)) protein is tRNA-specific adenosine deaminase.